We begin with the raw amino-acid sequence, 186 residues long: Akirin-1 (186 aa).

Residues M1–R64 form a disordered region. A Nuclear localization signal motif is present at residues P22–C27. The span at Q49–G60 shows a compositional bias: low complexity. An SYVS motif motif is present at residues S183–S186.

It belongs to the akirin family.

The protein localises to the nucleus. Its function is as follows. Molecular adapter that acts as a bridge between proteins, and which is involved skeletal muscle development. Functions as a signal transducer for MSTN during skeletal muscle regeneration and myogenesis. This Xenopus tropicalis (Western clawed frog) protein is Akirin-1.